The chain runs to 274 residues: 5'-3' exoribonuclease (274 aa).

Positions 8, 10, 15, 40, 65, 76, 190, 247, and 249 each coordinate Mn(2+).

The protein belongs to the PHP family. TrpH/YciV subfamily. Requires Mn(2+) as cofactor.

The enzyme catalyses a ribonucleoside 3',5'-bisphosphate + H2O = a ribonucleoside 5'-phosphate + phosphate. Functionally, efficiently catalyzes the hydrolysis of the 3'-phosphate from 3',5'-bis-phosphonucleotides as well as the successive hydrolysis of 5'-phosphomononucleotides from the 5'-end of short pieces of RNA and DNA, with no specificity toward the identity of the nucleotide base. Is more efficient at hydrolyzing RNA oligonucleotides than DNA oligonucleotides. This enzyme can also hydrolyze annealed DNA duplexes, albeit at a catalytic efficiency lower than that of the corresponding single-stranded oligonucleotides. The protein is 5'-3' exoribonuclease of Haemophilus influenzae (strain ATCC 51907 / DSM 11121 / KW20 / Rd).